Here is a 447-residue protein sequence, read N- to C-terminus: C4-dicarboxylate transport protein (447 aa).

The next 10 membrane-spanning stretches (helical) occupy residues 21–41, 57–77, 92–112, 141–161, 163–183, 201–221, 232–252, 320–340, 345–365, and 368–388; these read HLYV…YFAP, LVKM…IAGM, IYFL…VNIV, SLIG…LASG, ILQV…VGEA, LVAI…AYTV, LAML…IVLG, IYMT…LSWG, LLAV…AGFV, and AATL…IFGV.

The protein belongs to the dicarboxylate/amino acid:cation symporter (DAACS) (TC 2.A.23) family.

It localises to the cell inner membrane. In terms of biological role, responsible for the transport of dicarboxylates such as succinate, fumarate, and malate from the periplasm across the membrane. The polypeptide is C4-dicarboxylate transport protein (Granulibacter bethesdensis (strain ATCC BAA-1260 / CGDNIH1)).